The primary structure comprises 164 residues: 6,7-dimethyl-8-ribityllumazine synthase (164 aa).

5-amino-6-(D-ribitylamino)uracil is bound by residues F28, 62–64 (ALE), and 86–88 (AVI). 91–92 (ET) contributes to the (2S)-2-hydroxy-3-oxobutyl phosphate binding site. The active-site Proton donor is the H94. A 5-amino-6-(D-ribitylamino)uracil-binding site is contributed by N119. R133 is a binding site for (2S)-2-hydroxy-3-oxobutyl phosphate.

It belongs to the DMRL synthase family.

The enzyme catalyses (2S)-2-hydroxy-3-oxobutyl phosphate + 5-amino-6-(D-ribitylamino)uracil = 6,7-dimethyl-8-(1-D-ribityl)lumazine + phosphate + 2 H2O + H(+). Its pathway is cofactor biosynthesis; riboflavin biosynthesis; riboflavin from 2-hydroxy-3-oxobutyl phosphate and 5-amino-6-(D-ribitylamino)uracil: step 1/2. Catalyzes the formation of 6,7-dimethyl-8-ribityllumazine by condensation of 5-amino-6-(D-ribitylamino)uracil with 3,4-dihydroxy-2-butanone 4-phosphate. This is the penultimate step in the biosynthesis of riboflavin. This chain is 6,7-dimethyl-8-ribityllumazine synthase, found in Nitrosomonas europaea (strain ATCC 19718 / CIP 103999 / KCTC 2705 / NBRC 14298).